A 788-amino-acid chain; its full sequence is Endonuclease MutS2 (788 aa).

332–339 (GPNTGGKT) is a binding site for ATP. Residues 713–788 (VDLRGMDAEE…GTGVTVVELK (76 aa)) form the Smr domain.

This sequence belongs to the DNA mismatch repair MutS family. MutS2 subfamily. In terms of assembly, homodimer. Binds to stalled ribosomes, contacting rRNA.

Functionally, endonuclease that is involved in the suppression of homologous recombination and thus may have a key role in the control of bacterial genetic diversity. Acts as a ribosome collision sensor, splitting the ribosome into its 2 subunits. Detects stalled/collided 70S ribosomes which it binds and splits by an ATP-hydrolysis driven conformational change. Acts upstream of the ribosome quality control system (RQC), a ribosome-associated complex that mediates the extraction of incompletely synthesized nascent chains from stalled ribosomes and their subsequent degradation. Probably generates substrates for RQC. This is Endonuclease MutS2 from Clostridium botulinum (strain Kyoto / Type A2).